A 193-amino-acid polypeptide reads, in one-letter code: Interferon lambda-2 (193 aa).

The N-terminal stretch at methionine 1–alanine 19 is a signal peptide. Asparagine 105 carries N-linked (GlcNAc...) asparagine glycosylation.

Belongs to the lambda interferon family.

It localises to the secreted. Its function is as follows. Cytokine with antiviral, antitumour and immunomodulatory activities. Plays a critical role in the antiviral host defense, predominantly in the epithelial tissues. Acts as a ligand for the heterodimeric class II cytokine receptor composed of IL10RB and IFNLR1, and receptor engagement leads to the activation of the JAK/STAT signaling pathway resulting in the expression of IFN-stimulated genes (ISG), which mediate the antiviral state. Has a restricted receptor distribution and therefore restricted targets: is primarily active in epithelial cells and this cell type-selective action is because of the epithelial cell-specific expression of its receptor IFNLR1. Seems not to be essential for early virus-activated host defense in vaginal infection, but plays an important role in Toll-like receptor (TLR)-induced antiviral defense. Plays a significant role in the antiviral immune defense in the intestinal epithelium. Exerts an immunomodulatory effect by up-regulating MHC class I antigen expression. In Mus musculus (Mouse), this protein is Interferon lambda-2 (Ifnl2).